The sequence spans 408 residues: Glutathione-independent formaldehyde dehydrogenase (408 aa).

Cysteine 61 contributes to the Zn(2+) binding site. 3 residues coordinate NAD(+): glycine 62, serine 63, and histidine 66. Zn(2+)-binding residues include histidine 82, cysteine 112, cysteine 115, cysteine 118, cysteine 126, and aspartate 184. The NAD(+) site is built by valine 212, aspartate 232, arginine 237, valine 277, histidine 284, proline 311, leucine 313, glycine 348, and threonine 350.

The protein belongs to the zinc-containing alcohol dehydrogenase family. Requires Zn(2+) as cofactor.

The enzyme catalyses formaldehyde + NAD(+) + H2O = formate + NADH + 2 H(+). Activity is not inhibited by EDTA, which is probably not sufficient to displace the bound metal. In terms of biological role, dehydrogenase that catalyzes the NAD(+)-dependent oxidation of formaldehyde. Exhibits lower activity with acetaldehyde (about 10-fold lower than for formaldehyde), but cannot use methanol, ethanol, 1-butanol, glyoxal or formic acid. Is involved in formaldehyde detoxification. The protein is Glutathione-independent formaldehyde dehydrogenase of Bacillus subtilis (strain 168).